Consider the following 426-residue polypeptide: Glucose-1-phosphate adenylyltransferase (426 aa).

Alpha-D-glucose 1-phosphate-binding positions include Y100, G165, 180 to 181, and S191; that span reads EK.

Belongs to the bacterial/plant glucose-1-phosphate adenylyltransferase family. Homotetramer.

It catalyses the reaction alpha-D-glucose 1-phosphate + ATP + H(+) = ADP-alpha-D-glucose + diphosphate. Its pathway is glycan biosynthesis; glycogen biosynthesis. Involved in the biosynthesis of ADP-glucose, a building block required for the elongation reactions to produce glycogen. Catalyzes the reaction between ATP and alpha-D-glucose 1-phosphate (G1P) to produce pyrophosphate and ADP-Glc. This is Glucose-1-phosphate adenylyltransferase from Acetivibrio thermocellus (strain ATCC 27405 / DSM 1237 / JCM 9322 / NBRC 103400 / NCIMB 10682 / NRRL B-4536 / VPI 7372) (Clostridium thermocellum).